The primary structure comprises 672 residues: Acetoacetyl-CoA synthetase (672 aa).

Belongs to the ATP-dependent AMP-binding enzyme family.

The protein localises to the cytoplasm. The protein resides in the cytosol. The enzyme catalyses acetoacetate + ATP + CoA = acetoacetyl-CoA + AMP + diphosphate. Functionally, converts acetoacetate to acetoacetyl-CoA in the cytosol. Ketone body-utilizing enzyme, responsible for the synthesis of cholesterol and fatty acids. The sequence is that of Acetoacetyl-CoA synthetase (Aacs) from Mus musculus (Mouse).